A 278-amino-acid chain; its full sequence is Antiviral protein MAP (278 aa).

A signal peptide spans Met-1–Ala-28. Residues Cys-64 and Cys-248 are joined by a disulfide bond. Residue Glu-196 is part of the active site.

The enzyme catalyses Endohydrolysis of the N-glycosidic bond at one specific adenosine on the 28S rRNA.. Inhibits viral infection of plants, and protein synthesis in vitro. This is Antiviral protein MAP from Mirabilis jalapa (Garden four-o'clock).